A 313-amino-acid chain; its full sequence is Sideroflexin-4 (313 aa).

Helical transmembrane passes span 87-107 (AAFLPVTAPMVFLLMMPDTGI) and 141-161 (TLLGAGVSVSSTFIGLIPHLF). Position 173 is an N6-acetyllysine (lysine 173). 3 helical membrane passes run 175–191 (TLPIVFLAQVSGMNVFA), 230–247 (AVLFGTSALAPELFIHIF), and 269–289 (FFMMGLMVPVSFSMFPQIGQI).

Belongs to the sideroflexin family. Largely restricted to kidney, brain and heart.

It localises to the mitochondrion inner membrane. Mitochondrial amino-acid transporter. Does not act as a serine transporter: not able to mediate transport of serine into mitochondria. The sequence is that of Sideroflexin-4 from Mus musculus (Mouse).